The primary structure comprises 499 residues: MSDQQLDQALQQEENSLIALRKEKLAAERAKGNAFPNDFRRDNYCDALQKQYADKTKEELAEAAIPVKVAGRIMLNRGSFMVIQDMTGRIQVYVNRKTLSEETLAAVKTWDMGDIIAAEGTLARSGKGDLYVEMTSVRLLTKSLRPLPDKHHGLTDTEQRYRQRYVDLIVNEDVRQTFRVRSQVIAHIRSFLMKRDFLEVETPMLQTIPGGAAAKPFETHHNALDMEMFLRIAPELYLKRLVVGGFEKVFEINRNFRNEGVSTRHNPEFTMLEFYQAYADYEDNMDLTEELFRELAQLVLGSTDVPYGDKVFHFGEPFVRLSVFDSILKYNPELTADDLNDIDKARAIAKKAGAKVLGFEGLGKLQVMIFEELVEHKLEQPHFITQYPFEVSPLARRNDDNPNVTDRFELFIGGREIANAYSELNDAEDQAERFMAQVADKDAGDDEAMHYDADFVRALEYGMPPTAGEGIGIDRLVMLLTNSPSIRDVILFPHMRPQA.

Mg(2+) is bound by residues E409 and E416.

This sequence belongs to the class-II aminoacyl-tRNA synthetase family. As to quaternary structure, homodimer. Mg(2+) is required as a cofactor.

Its subcellular location is the cytoplasm. The enzyme catalyses tRNA(Lys) + L-lysine + ATP = L-lysyl-tRNA(Lys) + AMP + diphosphate. The chain is Lysine--tRNA ligase from Pseudomonas fluorescens (strain Pf0-1).